A 138-amino-acid polypeptide reads, in one-letter code: Superoxide dismutase [Mn] (138 aa).

The Mn(2+) site is built by Gln-1, His-49, Asp-133, and His-137.

It belongs to the iron/manganese superoxide dismutase family. The cofactor is Mn(2+).

It catalyses the reaction 2 superoxide + 2 H(+) = H2O2 + O2. Functionally, destroys superoxide anion radicals which are normally produced within the cells and which are toxic to biological systems. This is Superoxide dismutase [Mn] (sodA) from Mycobacteroides chelonae (Mycobacterium chelonae).